The following is a 352-amino-acid chain: MSLYCRTFFRRKSFGCYRLLSTYVTKARYLFELKEDEEACRKAQKTGVFYLFHDLDPLLQASGHRYLVPRLSRAELEGLLGKFGQDSQRIEDSVLVGCSEQQEAWFALDLGLKSASSSRASLPKSEMEAELGGSFIKLRQALFQLNSVDSSLLFTAQALLRWHDGHQFCSKSGQPTQKNVAGSKRVCPSSKIIYYPQMAPVVITLVSDGARCLLARQSSFPKGLYSALAGFCDIGESVEETVHREVAEEVGLEVENIQYSASQHWPFPNSSLMIACHATVKPGHTEIQVNLKELEAAAWFSLDEVTTALRRKGSLALQPSEASPLLLPPKLAIAHHLIKKWVETRSCSSLAA.

The N-terminal 20 residues, Met1 to Leu20, are a transit peptide targeting the mitochondrion. The Nudix hydrolase domain occupies Pro196–Ser323. The short motif at Arg216–Glu240 is the Nudix box element.

This sequence belongs to the Nudix hydrolase family. Mg(2+) is required as a cofactor. It depends on Mn(2+) as a cofactor.

The protein resides in the mitochondrion. It carries out the reaction NADH + H2O = reduced beta-nicotinamide D-ribonucleotide + AMP + 2 H(+). It catalyses the reaction NAD(+) + H2O = beta-nicotinamide D-ribonucleotide + AMP + 2 H(+). The enzyme catalyses NADPH + H2O = reduced beta-nicotinamide D-ribonucleotide + adenosine 2',5'-bisphosphate + 2 H(+). Its function is as follows. NAD(P)H pyrophosphatase that hydrolyzes NADH into NMNH and AMP, and NADPH into NMNH and 2',5'-ADP. Has a marked preference for the reduced pyridine nucleotides. Does not show activity toward NAD-capped RNAs; the NAD-cap is an atypical cap present at the 5'-end of some RNAs. This is NAD(P)H pyrophosphatase NUDT13, mitochondrial from Mus musculus (Mouse).